We begin with the raw amino-acid sequence, 144 residues long: Peptidyl-Asp metalloendopeptidase (144 aa).

His64 lines the Zn(2+) pocket. Glu65 is a catalytic residue. Zn(2+) is bound at residue His68.

This sequence belongs to the peptidase M72 family. Requires Zn(2+) as cofactor.

It carries out the reaction Cleavage of Xaa-|-Asp, Xaa-|-Glu and Xaa-|-cysteic acid bonds.. Functionally, metalloprotease, specifically cleaves on the N-terminal side of aspartyl, glutamyl and cysteic acid residues. The chain is Peptidyl-Asp metalloendopeptidase from Pseudomonas fragi.